The chain runs to 193 residues: Crossover junction endodeoxyribonuclease RuvC (193 aa).

Active-site residues include Asp7, Glu68, and Asp141. The Mg(2+) site is built by Asp7, Glu68, and Asp141. Positions 174–193 (RQWAQATQHATRRRGVRRGM) are disordered. Residues 183–193 (ATRRRGVRRGM) are compositionally biased toward basic residues.

It belongs to the RuvC family. In terms of assembly, homodimer which binds Holliday junction (HJ) DNA. The HJ becomes 2-fold symmetrical on binding to RuvC with unstacked arms; it has a different conformation from HJ DNA in complex with RuvA. In the full resolvosome a probable DNA-RuvA(4)-RuvB(12)-RuvC(2) complex forms which resolves the HJ. The cofactor is Mg(2+).

The protein localises to the cytoplasm. The enzyme catalyses Endonucleolytic cleavage at a junction such as a reciprocal single-stranded crossover between two homologous DNA duplexes (Holliday junction).. The RuvA-RuvB-RuvC complex processes Holliday junction (HJ) DNA during genetic recombination and DNA repair. Endonuclease that resolves HJ intermediates. Cleaves cruciform DNA by making single-stranded nicks across the HJ at symmetrical positions within the homologous arms, yielding a 5'-phosphate and a 3'-hydroxyl group; requires a central core of homology in the junction. The consensus cleavage sequence is 5'-(A/T)TT(C/G)-3'. Cleavage occurs on the 3'-side of the TT dinucleotide at the point of strand exchange. HJ branch migration catalyzed by RuvA-RuvB allows RuvC to scan DNA until it finds its consensus sequence, where it cleaves and resolves the cruciform DNA. This chain is Crossover junction endodeoxyribonuclease RuvC, found in Bifidobacterium animalis subsp. lactis (strain AD011).